Consider the following 1198-residue polypeptide: Structural polyprotein (1198 aa).

The segment at 2 to 15 is interaction with host EXOC1; that stretch reads TKKPGGPGKNRAIN. The interval 37–72 is hydrophobic; homodimerization of capsid protein C; the sequence is LLDGRGPVRFVLALITFFKFTALAPTKALLGRWKAV. The propeptide at 106–127 is ER anchor for the capsid protein C, removed in mature form by serine protease NS3; that stretch reads GGNEGSIMWLASLAVVIACAGA. Residues 110-130 form a helical membrane-spanning segment; sequence GSIMWLASLAVVIACAGAMKL. N-linked (GlcNAc...) asparagine; by host glycosylation is present at N142. The next 2 helical transmembrane spans lie at 254–274 and 280–294; these read WIIR…MLGS and VVFT…PAYS. Disulfide bonds link C297/C324, C354/C410, C354/C415, C368/C399, C386/C410, and C386/C415. The segment at 392–405 is fusion peptide; sequence DRGWGNGCGLFGKG. N448 carries an N-linked (GlcNAc...) asparagine; by host glycan. Disulfide bonds link C484–C581 and C598–C629. 2 helical membrane passes run 747-767 and 774-794; these read FGGM…WMGV and IALA…NVHA. Disulfide bonds link C798-C809, C849-C937, C973-C1017, C1074-C1123, C1085-C1106, and C1107-C1110. 2 N-linked (GlcNAc...) asparagine; by host glycosylation sites follow: N924 and N1001. The interval 1151–1177 is disordered; that stretch reads MVDPFSAGPSGDVSGHPGSPSQEVDGQ.

In terms of assembly, homodimer. Interacts (via N-terminus) with host EXOC1 (via C-terminus); this interaction results in EXOC1 degradation through the proteasome degradation pathway. Interacts with host CAPRIN1; this interaction is involved in the suppression of the integrated stress response. Forms heterodimers with envelope protein E in the endoplasmic reticulum and Golgi. As to quaternary structure, homodimer; in the endoplasmic reticulum and Golgi. Interacts with protein prM. Interacts with non-structural protein 1. Post-translationally, genome polyprotein: Specific enzymatic cleavages in vivo yield mature proteins. Cleavages in the lumen of endoplasmic reticulum are performed by host signal peptidase, whereas cleavages in the cytoplasmic side are performed by serine protease NS3. Signal cleavage at the 2K-4B site requires a prior NS3 protease-mediated cleavage at the 4A-2K site. In terms of processing, cleaved in post-Golgi vesicles by a host furin, releasing the mature small envelope protein M, and peptide pr. This cleavage is incomplete as up to 30% of viral particles still carry uncleaved prM. N-glycosylated.

It is found in the secreted. Its subcellular location is the virion membrane. It localises to the host endoplasmic reticulum membrane. Plays a role in virus budding by binding to the cell membrane and gathering the viral RNA into a nucleocapsid that forms the core of a mature virus particle. During virus entry, may induce genome penetration into the host cytoplasm after hemifusion induced by the surface proteins. Can migrate to the cell nucleus where it modulates host functions. Overcomes the anti-viral effects of host EXOC1 by sequestering and degrading the latter through the proteasome degradation pathway. Inhibits the integrated stress response (ISR) in the infected cell by binding to host CAPRIN1. Its function is as follows. Inhibits RNA silencing by interfering with host Dicer. In terms of biological role, prevents premature fusion activity of envelope proteins in trans-Golgi by binding to envelope protein E at pH6.0. After virion release in extracellular space, gets dissociated from E dimers. Functionally, acts as a chaperone for envelope protein E during intracellular virion assembly by masking and inactivating envelope protein E fusion peptide. prM is the only viral peptide matured by host furin in the trans-Golgi network probably to avoid catastrophic activation of the viral fusion activity in acidic Golgi compartment prior to virion release. prM-E cleavage is inefficient, and many virions are only partially matured. These uncleaved prM would play a role in immune evasion. May play a role in virus budding. Exerts cytotoxic effects by activating a mitochondrial apoptotic pathway through M ectodomain. May display a viroporin activity. Its function is as follows. Binds to host cell surface receptor and mediates fusion between viral and cellular membranes. Envelope protein is synthesized in the endoplasmic reticulum in the form of heterodimer with protein prM. They play a role in virion budding in the ER, and the newly formed immature particle is covered with 60 spikes composed of heterodimer between precursor prM and envelope protein E. The virion is transported to the Golgi apparatus where the low pH causes dissociation of PrM-E heterodimers and formation of E homodimers. prM-E cleavage is inefficient, and many virions are only partially matured. These uncleaved prM would play a role in immune evasion. In terms of biological role, may play a role in neuroinvasiveness. This chain is Structural polyprotein, found in Ardeidae (herons).